The sequence spans 167 residues: Leptin (167 aa).

Residues 1 to 21 form the signal peptide; it reads MRCGPLYQFLWLWPYLSYVEA. A disulfide bond links C117 and C167.

It belongs to the leptin family.

The protein localises to the secreted. Its function is as follows. Key player in the regulation of energy balance and body weight control. Once released into the circulation, has central and peripheral effects by binding LEPR, found in many tissues, which results in the activation of several major signaling pathways. In the hypothalamus, acts as an appetite-regulating factor that induces a decrease in food intake and an increase in energy consumption by inducing anorexinogenic factors and suppressing orexigenic neuropeptides, also regulates bone mass and secretion of hypothalamo-pituitary-adrenal hormones. In the periphery, increases basal metabolism, influences reproductive function, regulates pancreatic beta-cell function and insulin secretion, is pro-angiogenic for endothelial cell and affects innate and adaptive immunity. In the arcuate nucleus of the hypothalamus, activates by depolarization POMC neurons inducing FOS and SOCS3 expression to release anorexigenic peptides and inhibits by hyperpolarization NPY neurons inducing SOCS3 with a consequent reduction on release of orexigenic peptides. In addition to its known satiety inducing effect, has a modulatory role in nutrient absorption. In the intestine, reduces glucose absorption by enterocytes by activating PKC and leading to a sequential activation of p38, PI3K and ERK signaling pathways which exerts an inhibitory effect on glucose absorption. Acts as a growth factor on certain tissues, through the activation of different signaling pathways increases expression of genes involved in cell cycle regulation such as CCND1, via JAK2-STAT3 pathway, or VEGFA, via MAPK1/3 and PI3K-AKT1 pathways. May also play an apoptotic role via JAK2-STAT3 pathway and up-regulation of BIRC5 expression. Pro-angiogenic, has mitogenic activity on vascular endothelial cells and plays a role in matrix remodeling by regulating the expression of matrix metalloproteinases (MMPs) and tissue inhibitors of metalloproteinases (TIMPs). In innate immunity, modulates the activity and function of neutrophils by increasing chemotaxis and the secretion of oxygen radicals. Increases phagocytosis by macrophages and enhances secretion of pro-inflammatory mediators. Increases cytotoxic ability of NK cells. Plays a pro-inflammatory role, in synergy with IL1B, by inducing NOS2 which promotes the production of IL6, IL8 and Prostaglandin E2, through a signaling pathway that involves JAK2, PI3K, MAP2K1/MEK1 and MAPK14/p38. In adaptive immunity, promotes the switch of memory T-cells towards T helper-1 cell immune responses. Increases CD4(+)CD25(-) T-cell proliferation and reduces autophagy during TCR (T-cell receptor) stimulation, through MTOR signaling pathway activation and BCL2 up-regulation. The protein is Leptin (LEP) of Bubalus bubalis (Domestic water buffalo).